Here is a 245-residue protein sequence, read N- to C-terminus: Keratin-associated protein 10-12 (245 aa).

Tandem repeats lie at residues C36–P40, C41–A45, C62–T66, C84–S88, C94–S98, C104–V108, C109–V113, C114–V118, C119–V123, C124–S128, C131–S135, C141–S145, C151–V155, C156–I160, C161–V165, C173–S177, C183–S187, C188–S192, and C214–T218. The segment at C36–T218 is 19 X 5 AA repeats of C-C-X(3).

This sequence belongs to the KRTAP type 10 family. Interacts with hair keratins. Restricted to a narrow region of the hair fiber cuticle, lying approximately 20 cell layers above the apex of the dermal papilla of the hair root; not detected in any other tissues.

Functionally, in the hair cortex, hair keratin intermediate filaments are embedded in an interfilamentous matrix, consisting of hair keratin-associated proteins (KRTAP), which are essential for the formation of a rigid and resistant hair shaft through their extensive disulfide bond cross-linking with abundant cysteine residues of hair keratins. The matrix proteins include the high-sulfur and high-glycine-tyrosine keratins. The sequence is that of Keratin-associated protein 10-12 (KRTAP10-12) from Homo sapiens (Human).